We begin with the raw amino-acid sequence, 95 residues long: Large ribosomal subunit protein bL25 (95 aa).

The protein belongs to the bacterial ribosomal protein bL25 family. As to quaternary structure, part of the 50S ribosomal subunit; part of the 5S rRNA/L5/L18/L25 subcomplex. Contacts the 5S rRNA. Binds to the 5S rRNA independently of L5 and L18.

In terms of biological role, this is one of the proteins that binds to the 5S RNA in the ribosome where it forms part of the central protuberance. This chain is Large ribosomal subunit protein bL25, found in Shewanella oneidensis (strain ATCC 700550 / JCM 31522 / CIP 106686 / LMG 19005 / NCIMB 14063 / MR-1).